The following is a 518-amino-acid chain: Protein CYCLOPS (518 aa).

Positions 401–451 (DKKRKSLERYGSITSAVSDDKGDTTKKRRVERSRKMAEAKERNSTPSVPSD) are disordered. 2 consecutive short sequence motifs (nuclear localization signal) follow at residues 402 to 405 (KKRK) and 426 to 429 (KKRR). Residues 433–443 (SRKMAEAKERN) show a composition bias toward basic and acidic residues. Residues 452 to 518 (MQAVLKRCEN…ERILSETEKM (67 aa)) adopt a coiled-coil conformation.

The protein belongs to the CYCLOPS family. As to quaternary structure, forms homodimers. Interacts with CCAMK. In terms of processing, phosphorylated at the N-terminus by CCAMK. Expressed in roots.

The protein localises to the nucleus. In terms of biological role, involved in symbiotic signaling. Required for root infection by symbiotic rhizobia, infection thread (IT) formation, and nodule development. Probably not involved in nodule organogenesis. Involved in arbuscular mycorrhizal (AM) symbiosis. Required for fungal infection of the outer cortical cell layers, and for arbuscule development during the AM symbiosis, by binding, as a complex comprising CCaMK, CYCLOPS, and DELLA, to RAM1 promoter cis element thus promoting its expression. Acts downstream of CCAMK. Binds to the promoter of ERN1 and strongly transactivates ERN1, a transcriptional regulator required for nodulation. This is Protein CYCLOPS from Lotus japonicus (Lotus corniculatus var. japonicus).